The chain runs to 446 residues: Elongation factor 1-alpha (446 aa).

In terms of domain architecture, tr-type G spans 5–230; the sequence is KNHLNLVVIG…DALDQPKRPK (226 aa). Residues 14 to 21 are G1; sequence GHVDSGKS. 14–21 contributes to the GTP binding site; the sequence is GHVDSGKS. The G2 stretch occupies residues 70 to 74; it reads GITID. Residues 91-94 form a G3 region; that stretch reads DAPG. GTP is bound by residues 91–95 and 153–156; these read DAPGH and NKMD. Residues 153–156 form a G4 region; sequence NKMD. The segment at 194–196 is G5; the sequence is SGW.

The protein belongs to the TRAFAC class translation factor GTPase superfamily. Classic translation factor GTPase family. EF-Tu/EF-1A subfamily.

It is found in the cytoplasm. Its function is as follows. This protein promotes the GTP-dependent binding of aminoacyl-tRNA to the A-site of ribosomes during protein biosynthesis. The sequence is that of Elongation factor 1-alpha (EFAA) from Stylonychia lemnae (Ciliate).